Here is a 480-residue protein sequence, read N- to C-terminus: Protein nucleotidyltransferase YdiU (480 aa).

Residues Gly86, Gly88, Arg89, Lys109, Asp121, Gly122, Arg172, and Arg179 each coordinate ATP. Asp248 (proton acceptor) is an active-site residue. Asn249 and Asp258 together coordinate Mg(2+). Asp258 contacts ATP.

The protein belongs to the SELO family. Requires Mg(2+) as cofactor. Mn(2+) serves as cofactor.

The catalysed reaction is L-seryl-[protein] + ATP = 3-O-(5'-adenylyl)-L-seryl-[protein] + diphosphate. The enzyme catalyses L-threonyl-[protein] + ATP = 3-O-(5'-adenylyl)-L-threonyl-[protein] + diphosphate. It catalyses the reaction L-tyrosyl-[protein] + ATP = O-(5'-adenylyl)-L-tyrosyl-[protein] + diphosphate. It carries out the reaction L-histidyl-[protein] + UTP = N(tele)-(5'-uridylyl)-L-histidyl-[protein] + diphosphate. The catalysed reaction is L-seryl-[protein] + UTP = O-(5'-uridylyl)-L-seryl-[protein] + diphosphate. The enzyme catalyses L-tyrosyl-[protein] + UTP = O-(5'-uridylyl)-L-tyrosyl-[protein] + diphosphate. Functionally, nucleotidyltransferase involved in the post-translational modification of proteins. It can catalyze the addition of adenosine monophosphate (AMP) or uridine monophosphate (UMP) to a protein, resulting in modifications known as AMPylation and UMPylation. The polypeptide is Protein nucleotidyltransferase YdiU (Salmonella schwarzengrund (strain CVM19633)).